The chain runs to 331 residues: Probable tRNA pseudouridine synthase B (331 aa).

The segment covering 1-15 (MRCSQREVFVKREEP) has biased composition (basic and acidic residues). A disordered region spans residues 1–27 (MRCSQREVFVKREEPTNPEWGKPPSQR). Catalysis depends on Asp-71, which acts as the Nucleophile. The PUA domain occupies 238 to 313 (LPKIWVRDSA…AVVRTDRVVM (76 aa)).

The protein belongs to the pseudouridine synthase TruB family. Type 2 subfamily.

The catalysed reaction is uridine(55) in tRNA = pseudouridine(55) in tRNA. In terms of biological role, could be responsible for synthesis of pseudouridine from uracil-55 in the psi GC loop of transfer RNAs. The sequence is that of Probable tRNA pseudouridine synthase B from Pyrobaculum arsenaticum (strain DSM 13514 / JCM 11321 / PZ6).